The chain runs to 367 residues: 2-aminoethylphosphonate--pyruvate transaminase (367 aa).

The residue at position 193 (K193) is an N6-(pyridoxal phosphate)lysine.

Belongs to the class-V pyridoxal-phosphate-dependent aminotransferase family. PhnW subfamily. In terms of assembly, homodimer. The cofactor is pyridoxal 5'-phosphate.

It carries out the reaction (2-aminoethyl)phosphonate + pyruvate = phosphonoacetaldehyde + L-alanine. Involved in phosphonate degradation. The sequence is that of 2-aminoethylphosphonate--pyruvate transaminase from Vibrio vulnificus (strain YJ016).